The primary structure comprises 142 residues: Large ribosomal subunit protein uL22c (142 aa).

Belongs to the universal ribosomal protein uL22 family. In terms of assembly, part of the 50S ribosomal subunit.

The protein resides in the plastid. The protein localises to the chloroplast. In terms of biological role, this protein binds specifically to 23S rRNA. Functionally, the globular domain of the protein is located near the polypeptide exit tunnel on the outside of the subunit, while an extended beta-hairpin is found that lines the wall of the exit tunnel in the center of the 70S ribosome. This Oenothera parviflora (Small-flowered evening primrose) protein is Large ribosomal subunit protein uL22c (rpl22).